The following is a 343-amino-acid chain: Vacuolar membrane protein Kpol_1003p17 (343 aa).

The disordered stretch occupies residues 45 to 65 (TTDTSGTSTSSRDVSSGQSTL). A helical transmembrane segment spans residues 101–121 (FIAVGSIIGGIFGGVLIWWMI). A disordered region spans residues 235–343 (EVLQQQRQRR…YLDDMLENDN (109 aa)). Positions 254-264 (ELPSTPPSNFK) are enriched in polar residues. The span at 269-280 (KPERSASPERKS) shows a compositional bias: basic and acidic residues. The segment covering 281 to 290 (RSPIRQHRKN) has biased composition (basic residues).

Belongs to the PRM5 family.

The protein localises to the vacuole membrane. In Vanderwaltozyma polyspora (strain ATCC 22028 / DSM 70294 / BCRC 21397 / CBS 2163 / NBRC 10782 / NRRL Y-8283 / UCD 57-17) (Kluyveromyces polysporus), this protein is Vacuolar membrane protein Kpol_1003p17.